The chain runs to 692 residues: MAIERITDNKFELVSKYDPAGDQGQAISELVENIENGEKAQILRGATGTGKTYTMSQVIAQTGKPTLVMAHNKTLAGQLYSEFKEFFPNNAVEYFVSYYDYYQPEAYVPSSDTYIEKDSSVNDEIDKLRHSATSSLLERNDVIVVASVSCIYGLGSPKEYQDSVVSLRPGQEISRDQLLNDLVGIQFERNDIDFQRGCFRVRGDVVEVFPASRDEHAFRVEFFGDEIDRIREIEVLTGQVLGEVDHLAIFPATHFMTNDDRMEESIAKIEAELEAQLKVFRSEGKLLEAQRLEQRTNYDIEMLREMGYCNGVENYSRHMDGREEGEPPYTLLDFFPDDFMIMIDESHMTMGQVKGMYNGDRARKEMLCNYGFRLPSALDNRPLKREEFESHVHQIVYVSATPGDYEMEQTDTIVEQIIRPTGLLDPVVEVRPMMGQIDDLVGEIHKRAEKNERVFVTTLTKKMSEDLTAYFKEMGIKVKYMHSDIKTLERTEIIRDLRLGVFDVLVGINLLREGIDVPEVSLVAILDADKEGFLRNERGLIQTIGRAARNSEGHVILYSDMAKALDENDPADKEILDSGYYTEYEGQKYKITRSMKHAMDETARRRDIQMAYNEEHGITPQTIKKEIRDLIAITKKTDSGELEEVDASAMNKKERKALVKKLEKEMQQAAAALDFEGAAQLRDMVLELRAMD.

In terms of domain architecture, Helicase ATP-binding spans 32-187 (ENIENGEKAQ…LLNDLVGIQF (156 aa)). 45–52 (GATGTGKT) serves as a coordination point for ATP. Residues 98-121 (YYDYYQPEAYVPSSDTYIEKDSSV) carry the Beta-hairpin motif. The Helicase C-terminal domain maps to 436-631 (QIDDLVGEIH…TIKKEIRDLI (196 aa)). In terms of domain architecture, UVR spans 656 to 691 (KALVKKLEKEMQQAAAALDFEGAAQLRDMVLELRAM).

It belongs to the UvrB family. In terms of assembly, forms a heterotetramer with UvrA during the search for lesions. Interacts with UvrC in an incision complex.

It localises to the cytoplasm. Functionally, the UvrABC repair system catalyzes the recognition and processing of DNA lesions. A damage recognition complex composed of 2 UvrA and 2 UvrB subunits scans DNA for abnormalities. Upon binding of the UvrA(2)B(2) complex to a putative damaged site, the DNA wraps around one UvrB monomer. DNA wrap is dependent on ATP binding by UvrB and probably causes local melting of the DNA helix, facilitating insertion of UvrB beta-hairpin between the DNA strands. Then UvrB probes one DNA strand for the presence of a lesion. If a lesion is found the UvrA subunits dissociate and the UvrB-DNA preincision complex is formed. This complex is subsequently bound by UvrC and the second UvrB is released. If no lesion is found, the DNA wraps around the other UvrB subunit that will check the other stand for damage. This Lactococcus lactis subsp. cremoris (strain SK11) protein is UvrABC system protein B.